We begin with the raw amino-acid sequence, 29 residues long: Cyclotide psyleio B (29 aa).

Residues 1–29 (GDLPICGETCFGGTCNTPGCVCAWPVCNR) constitute a cross-link (cyclopeptide (Gly-Arg)). Intrachain disulfides connect Cys6/Cys20, Cys10/Cys22, and Cys15/Cys27.

In terms of processing, this is a cyclic peptide.

In terms of biological role, probably participates in a plant defense mechanism. In Psychotria brachyceras, this protein is Cyclotide psyleio B.